Reading from the N-terminus, the 402-residue chain is Protein rds1 (402 aa).

May have a function in stress-related responses of the cell. The chain is Protein rds1 (rds1) from Schizosaccharomyces pombe (strain 972 / ATCC 24843) (Fission yeast).